A 177-amino-acid polypeptide reads, in one-letter code: Isopentenyl-diphosphate Delta-isomerase 2 (177 aa).

Mn(2+) contacts are provided by histidine 24 and histidine 30. The 133-residue stretch at 28 to 160 (MLHRAFSIFV…PDVYTVWFKK (133 aa)) folds into the Nudix hydrolase domain. The active site involves cysteine 65. Residue cysteine 65 participates in Mg(2+) binding. Residue histidine 67 participates in Mn(2+) binding. Glutamate 85 is a binding site for Mg(2+). The Mn(2+) site is built by glutamate 110 and glutamate 112. Glutamate 112 is a catalytic residue.

It belongs to the IPP isomerase type 1 family. As to quaternary structure, homodimer. Requires Mg(2+) as cofactor. Mn(2+) is required as a cofactor.

The protein resides in the cytoplasm. It catalyses the reaction isopentenyl diphosphate = dimethylallyl diphosphate. It participates in isoprenoid biosynthesis; dimethylallyl diphosphate biosynthesis; dimethylallyl diphosphate from isopentenyl diphosphate: step 1/1. In terms of biological role, catalyzes the 1,3-allylic rearrangement of the homoallylic substrate isopentenyl (IPP) to its highly electrophilic allylic isomer, dimethylallyl diphosphate (DMAPP). The protein is Isopentenyl-diphosphate Delta-isomerase 2 of Photorhabdus laumondii subsp. laumondii (strain DSM 15139 / CIP 105565 / TT01) (Photorhabdus luminescens subsp. laumondii).